We begin with the raw amino-acid sequence, 268 residues long: Thiazole synthase (268 aa).

Residue Lys108 is the Schiff-base intermediate with DXP of the active site. 1-deoxy-D-xylulose 5-phosphate contacts are provided by residues Gly169, 195–196 (AG), and 217–218 (NS). The segment at 248–268 (RLKENPLASPSSPLEGVISNN) is disordered. Over residues 255–268 (ASPSSPLEGVISNN) the composition is skewed to polar residues.

This sequence belongs to the ThiG family. Homotetramer. Forms heterodimers with either ThiH or ThiS.

It localises to the cytoplasm. The catalysed reaction is [ThiS sulfur-carrier protein]-C-terminal-Gly-aminoethanethioate + 2-iminoacetate + 1-deoxy-D-xylulose 5-phosphate = [ThiS sulfur-carrier protein]-C-terminal Gly-Gly + 2-[(2R,5Z)-2-carboxy-4-methylthiazol-5(2H)-ylidene]ethyl phosphate + 2 H2O + H(+). It participates in cofactor biosynthesis; thiamine diphosphate biosynthesis. Functionally, catalyzes the rearrangement of 1-deoxy-D-xylulose 5-phosphate (DXP) to produce the thiazole phosphate moiety of thiamine. Sulfur is provided by the thiocarboxylate moiety of the carrier protein ThiS. In vitro, sulfur can be provided by H(2)S. The polypeptide is Thiazole synthase (Prochlorococcus marinus (strain NATL1A)).